A 322-amino-acid polypeptide reads, in one-letter code: Beta-ketoacyl-[acyl-carrier-protein] synthase III (322 aa).

Residues Cys-113 and His-249 contribute to the active site. The interval Gln-250 to Arg-254 is ACP-binding. Asn-279 is a catalytic residue.

This sequence belongs to the thiolase-like superfamily. FabH family. As to quaternary structure, homodimer.

The protein resides in the cytoplasm. The catalysed reaction is malonyl-[ACP] + acetyl-CoA + H(+) = 3-oxobutanoyl-[ACP] + CO2 + CoA. The protein operates within lipid metabolism; fatty acid biosynthesis. In terms of biological role, catalyzes the condensation reaction of fatty acid synthesis by the addition to an acyl acceptor of two carbons from malonyl-ACP. Catalyzes the first condensation reaction which initiates fatty acid synthesis and may therefore play a role in governing the total rate of fatty acid production. Possesses both acetoacetyl-ACP synthase and acetyl transacylase activities. Its substrate specificity determines the biosynthesis of branched-chain and/or straight-chain of fatty acids. The protein is Beta-ketoacyl-[acyl-carrier-protein] synthase III of Marinobacter nauticus (strain ATCC 700491 / DSM 11845 / VT8) (Marinobacter aquaeolei).